We begin with the raw amino-acid sequence, 172 residues long: Shikimate kinase (172 aa).

Residue 11–16 (GTGKTA) participates in ATP binding. Thr-15 contacts Mg(2+). The substrate site is built by Asp-33, Arg-57, and Gly-79. Residue Arg-117 participates in ATP binding. Arg-136 provides a ligand contact to substrate.

It belongs to the shikimate kinase family. Monomer. Mg(2+) is required as a cofactor.

Its subcellular location is the cytoplasm. The catalysed reaction is shikimate + ATP = 3-phosphoshikimate + ADP + H(+). Its pathway is metabolic intermediate biosynthesis; chorismate biosynthesis; chorismate from D-erythrose 4-phosphate and phosphoenolpyruvate: step 5/7. Its function is as follows. Catalyzes the specific phosphorylation of the 3-hydroxyl group of shikimic acid using ATP as a cosubstrate. This is Shikimate kinase from Pelotomaculum thermopropionicum (strain DSM 13744 / JCM 10971 / SI).